The following is a 133-amino-acid chain: Small ribosomal subunit protein uS8 (133 aa).

It belongs to the universal ribosomal protein uS8 family. Part of the 30S ribosomal subunit. Contacts proteins S5 and S12.

In terms of biological role, one of the primary rRNA binding proteins, it binds directly to 16S rRNA central domain where it helps coordinate assembly of the platform of the 30S subunit. This chain is Small ribosomal subunit protein uS8, found in Amoebophilus asiaticus (strain 5a2).